Here is a 325-residue protein sequence, read N- to C-terminus: Aldo-keto reductase family 1 member A1 (325 aa).

Residue Ala-2 is modified to N-acetylalanine. A Phosphoserine modification is found at Ser-4. NADP(+) is bound by residues 11–20, Thr-21, Trp-22, and Asp-45; that span reads GQKMPLIGLG. Tyr-50 (proton donor) is an active-site residue. N6-acetyllysine; alternate is present on Lys-127. Lys-127 is subject to N6-succinyllysine; alternate. Lys-145 is subject to N6-succinyllysine. Residues Ser-162, Asn-163, Ser-211, Leu-213, Ser-215, Ser-216, Lys-263, Ser-264, Val-265, Thr-266, Arg-269, Gln-272, and Asn-273 each contribute to the NADP(+) site. The residue at position 211 (Ser-211) is a Phosphoserine.

Belongs to the aldo/keto reductase family. As to quaternary structure, monomer.

It is found in the cytoplasm. The protein localises to the cytosol. Its subcellular location is the apical cell membrane. It carries out the reaction a primary alcohol + NADP(+) = an aldehyde + NADPH + H(+). The catalysed reaction is glycerol + NADP(+) = D-glyceraldehyde + NADPH + H(+). The enzyme catalyses glycerol + NADP(+) = L-glyceraldehyde + NADPH + H(+). It catalyses the reaction L-gulonate + NADP(+) = aldehydo-D-glucuronate + NADPH + H(+). It carries out the reaction L-gulono-1,4-lactone + NADP(+) = D-glucurono-3,6-lactone + NADPH + H(+). The catalysed reaction is allyl alcohol + NADP(+) = acrolein + NADPH + H(+). The enzyme catalyses hydroxyacetone + NADP(+) = methylglyoxal + NADPH + H(+). It catalyses the reaction 3-deoxyfructose + NADP(+) = 3-deoxyglucosone + NADPH + H(+). It carries out the reaction (R)-mevalonate + NADP(+) = (R)-mevaldate + NADPH + H(+). The catalysed reaction is pyridine 3-methanol + NADP(+) = pyridine-3-carbaldehyde + NADPH + H(+). The enzyme catalyses S-nitroso-CoA + NADPH + H(+) = sulfinamide-CoA + NADP(+). It catalyses the reaction S-nitrosoglutathione + NADPH + H(+) = S-(hydroxysulfenamide)glutathione + NADP(+). Catalyzes the NADPH-dependent reduction of a wide variety of carbonyl-containing compounds to their corresponding alcohols. Displays enzymatic activity towards endogenous metabolites such as aromatic and aliphatic aldehydes, ketones, monosaccharides and bile acids, with a preference for negatively charged substrates, such as glucuronate and succinic semialdehyde. Plays an important role in ascorbic acid biosynthesis by catalyzing the reduction of D-glucuronic acid and D-glucurono-gamma-lactone. Functions as a detoxifiying enzyme by reducing a range of toxic aldehydes. Reduces methylglyoxal and 3-deoxyglucosone, which are present at elevated levels under hyperglycemic conditions and are cytotoxic. Involved also in the detoxification of lipid-derived aldehydes like acrolein. Plays a role in the activation of procarcinogens, such as polycyclic aromatic hydrocarbon trans-dihydrodiols, and in the metabolism of various xenobiotics and drugs. Also acts as an inhibitor of protein S-nitrosylation by mediating degradation of S-nitroso-coenzyme A (S-nitroso-CoA), a cofactor required to S-nitrosylate proteins. S-nitroso-CoA reductase activity is involved in reprogramming intermediary metabolism in renal proximal tubules, notably by inhibiting protein S-nitrosylation of isoform 2 of PKM (PKM2). Also acts as a S-nitroso-glutathione reductase by catalyzing the NADPH-dependent reduction of S-nitrosoglutathione. Displays no reductase activity towards retinoids. This chain is Aldo-keto reductase family 1 member A1 (AKR1A1), found in Sus scrofa (Pig).